Here is a 520-residue protein sequence, read N- to C-terminus: Transactivator/viroplasmin protein (520 aa).

Residues 486–520 (VQDASADSGPKDGPPPTRSIVEKEDVPTTSSKQVD) form a disordered region.

It belongs to the caulimoviridae viroplasmin family.

The protein resides in the host cytoplasm. Enhances the ribosomal termination-reinitiation event leading to the translation of major open reading frames on the polycistronic viral RNAs. This chain is Transactivator/viroplasmin protein, found in Cauliflower mosaic virus (strain BBC) (CaMV).